The primary structure comprises 203 residues: MSRYTGPSWKQARRLGLSLTGTGKELARRNYVPGQHGPNNRSKLSEYGLQLAEKQKLRFTYGVGEKQFRNLFVQATKIKGGILGFNFMLLLERRLDNVVYRLGLATTRRQARQFVNHGHILVDGKRVDIPSYRVTPGQVISVREKSLKVPAILEAVEATLGRPAFVSFDAEKLEGSLTRLPERDEINPEINEALVVEFYNKML.

The region spanning 93 to 156 (RRLDNVVYRL…LKVPAILEAV (64 aa)) is the S4 RNA-binding domain.

It belongs to the universal ribosomal protein uS4 family. Part of the 30S ribosomal subunit. Contacts protein S5. The interaction surface between S4 and S5 is involved in control of translational fidelity.

In terms of biological role, one of the primary rRNA binding proteins, it binds directly to 16S rRNA where it nucleates assembly of the body of the 30S subunit. With S5 and S12 plays an important role in translational accuracy. In Streptococcus pneumoniae serotype 2 (strain D39 / NCTC 7466), this protein is Small ribosomal subunit protein uS4.